Here is a 306-residue protein sequence, read N- to C-terminus: Curved DNA-binding protein (306 aa).

A J domain is found at 5 to 69 (DYYAIMGVKP…QRRAEYDQLW (65 aa)).

It localises to the cytoplasm. The protein resides in the nucleoid. Its function is as follows. DNA-binding protein that preferentially recognizes a curved DNA sequence. It is probably a functional analog of DnaJ; displays overlapping activities with DnaJ, but functions under different conditions, probably acting as a molecular chaperone in an adaptive response to environmental stresses other than heat shock. Lacks autonomous chaperone activity; binds native substrates and targets them for recognition by DnaK. Its activity is inhibited by the binding of CbpM. The chain is Curved DNA-binding protein from Salmonella choleraesuis (strain SC-B67).